The chain runs to 236 residues: Flagellar L-ring protein (236 aa).

Positions 1-24 (MKNKNRLNTIKLLSISLLIAVTTA) are cleaved as a signal peptide. A lipid anchor (N-palmitoyl cysteine) is attached at cysteine 25. Cysteine 25 carries S-diacylglycerol cysteine lipidation.

Belongs to the FlgH family. The basal body constitutes a major portion of the flagellar organelle and consists of four rings (L,P,S, and M) mounted on a central rod.

The protein localises to the cell outer membrane. It localises to the bacterial flagellum basal body. Assembles around the rod to form the L-ring and probably protects the motor/basal body from shearing forces during rotation. In Colwellia psychrerythraea (strain 34H / ATCC BAA-681) (Vibrio psychroerythus), this protein is Flagellar L-ring protein.